The primary structure comprises 475 residues: Mucin-1 (475 aa).

An N-terminal signal peptide occupies residues 1-23; it reads MTPGTQSLFFLLLLLTVLTVVTG. Residues 23–252 form a disordered region; the sequence is GSGHASSTPG…SPLTSSNHST (230 aa). Over 24-380 the chain is Extracellular; the sequence is SGHASSTPGG…QSGAGVPGWG (357 aa). The span at 38-48 shows a compositional bias: polar residues; it reads SATQRSSMPSS. Over residues 54-75 the composition is skewed to low complexity; the sequence is VSMTSSVLSSHSPGSGSSTTQG. 5 consecutive repeat copies span residues 86–105, 106–125, 126–145, 146–165, and 166–185. A 5 X 20 AA approximate tandem repeats region spans residues 86 to 185; it reads PASGSAATWG…HNVTSASGSA (100 aa). Polar residues predominate over residues 90–102; sequence SAATWGQDVTSVP. O-linked (GalNAc...) threonine glycosylation is found at Thr93 and Thr99. Ser100 carries an O-linked (GalNAc...) serine glycan. O-linked (GalNAc...) threonine glycosylation occurs at Thr104. Over residues 109 to 122 the composition is skewed to polar residues; the sequence is GSTTSPAQDVTSAP. The N-linked (GlcNAc...) asparagine glycan is linked to Asn177. The span at 180–190 shows a compositional bias: low complexity; it reads SASGSASGSAS. Polar residues-rich tracts occupy residues 191–213 and 233–252; these read TLVHNGTSARATTTPASKSTPFS and DASSTHHSTVSPLTSSNHST. 4 N-linked (GlcNAc...) asparagine glycosylation sites follow: Asn195, Asn249, Asn275, and Asn353. The SEA domain occupies 259–368; it reads GVSFFFLSFH…VSVSDVPFPF (110 aa). Residues 381–401 traverse the membrane as a helical segment; it reads IALLVLVCVLVALAIVYLIAL. Topologically, residues 402–475 are cytoplasmic; that stretch reads AVCQCRRKNY…PAVAATSANL (74 aa). 2 S-palmitoyl cysteine lipidation sites follow: Cys404 and Cys406. The interaction with P53 stretch occupies residues 412–448; that stretch reads GQLDIFPARDAYHPMSEYPTYHTHGRYVPPSSTNRSP. The residue at position 423 (Tyr423) is a Phosphotyrosine; by PDGFR. The Interaction with GRB2 signature appears at 423-426; sequence YHPM. The residue at position 432 (Tyr432) is a Phosphotyrosine. Positions 435 to 460 are disordered; that stretch reads HGRYVPPSSTNRSPYEKVSEGNGGSS. Tyr438 carries the phosphotyrosine; by PDGFR modification. The tract at residues 443-450 is required for interaction with GSK3B; that stretch reads STNRSPYE. Thr444 bears the Phosphothreonine; by PKC/PRKCD mark. Ser447 carries the post-translational modification Phosphoserine; by GSK3-beta. At Tyr449 the chain carries Phosphotyrosine; by CSK, EGFR and SRC. The Interaction with SRC and ESR1 signature appears at 449–452; that stretch reads YEKV. The tract at residues 453 to 461 is required for interaction with beta- and gamma-catenins; it reads SEGNGGSSL. Tyr463 carries the post-translational modification Phosphotyrosine. A Required for interaction with AP1S2 motif is present at residues 463-466; that stretch reads YTNP.

In terms of assembly, the alpha subunit forms a tight, non-covalent heterodimeric complex with the proteolytically-released beta-subunit. Binds directly the SH2 domain of GRB2, and forms a MUC1/GRB2/SOS1 complex involved in RAS signaling. The cytoplasmic tail (MUC1CT) interacts with several proteins such as SRC, CTNNB1 and ERBs. Interaction with the SH2 domain of CSK decreases interaction with GSK3B. Interacts with CTNNB1/beta-catenin and JUP/gamma-catenin and promotes cell adhesion. Interaction with JUP/gamma-catenin is induced by heregulin. Binds PRKCD, ERBB2, ERBB3 and ERBB4. Heregulin (HRG) stimulates the interaction with ERBB2 and, to a much lesser extent, the interaction with ERBB3 and ERBB4. Interacts with P53 in response to DNA damage. Interacts with KLF4. Interacts with estrogen receptor alpha/ESR1, through its DNA-binding domain, and stimulates its transcription activity. Binds ADAM17. Probably both N- and O-glycosylated (in repeat region). Post-translationally, proteolytic cleavage in the SEA domain occurs in the endoplasmic reticulum by an autoproteolytic mechanism and requires the full-length SEA domain as well as requiring a Ser, Thr or Cys residue at the P + 1 site. Ectodomain shedding is mediated by ADAM17 in uterine epithelial cells. In terms of processing, dual palmitoylation on cysteine residues in the CQC motif is required for recycling from endosomes back to the plasma membrane. Phosphorylated on tyrosines and serine residues in the C-terminal. Phosphorylation on tyrosines in the C-terminal increases the nuclear location of MUC1 and beta-catenin. Phosphorylation by PKC delta induces binding of MUC1 to beta-catenin/CTNNB1 and thus decreases the formation of the beta-catenin/E-cadherin complex. Src-mediated phosphorylation inhibits interaction with GSK3B. Csk- or Src- or EGFR-mediated phosphorylation on Tyr-449 increases binding to beta-catenin/CTNNB1. GSK3B-mediated phosphorylation on Ser-447 decreases this interaction but restores the formation of the beta-cadherin/E-cadherin complex. On T-cell receptor activation, phosphorylated by LCK. PDGFR-mediated phosphorylation increases nuclear colocalization of MUC1CT and CTNNB1.

The protein localises to the apical cell membrane. The protein resides in the cell membrane. Its subcellular location is the cytoplasm. It is found in the nucleus. Functionally, the alpha subunit has cell adhesive properties. Can act both as an adhesion and an anti-adhesion protein. May provide a protective layer on epithelial cells against bacterial and enzyme attack. Its function is as follows. The beta subunit contains a C-terminal domain which is involved in cell signaling, through phosphorylations and protein-protein interactions. Modulates signaling in ERK, Src and NF-kappaB pathways. In activated T-cells, influences directly or indirectly the Ras/MAPK pathway. Promotes tumor progression. Regulates P53-mediated transcription and determines cell fate in the genotoxic stress response. Binds, together with KLF4, the PE21 promoter element of P53 and represses P53 activity. The chain is Mucin-1 (MUC1) from Hylobates lar (Lar gibbon).